Consider the following 449-residue polypeptide: Signal recognition particle protein (449 aa).

Residues 109–116, 191–195, and 249–252 contribute to the GTP site; these read GLQGGGKT, DTAGR, and SRID.

It belongs to the GTP-binding SRP family. SRP54 subfamily. In terms of assembly, part of the signal recognition particle protein translocation system, which is composed of SRP and FtsY. SRP is a ribonucleoprotein composed of Ffh and a 4.5S RNA molecule.

The protein resides in the cytoplasm. The catalysed reaction is GTP + H2O = GDP + phosphate + H(+). In terms of biological role, involved in targeting and insertion of nascent membrane proteins into the cytoplasmic membrane. Binds to the hydrophobic signal sequence of the ribosome-nascent chain (RNC) as it emerges from the ribosomes. The SRP-RNC complex is then targeted to the cytoplasmic membrane where it interacts with the SRP receptor FtsY. Interaction with FtsY leads to the transfer of the RNC complex to the Sec translocase for insertion into the membrane, the hydrolysis of GTP by both Ffh and FtsY, and the dissociation of the SRP-FtsY complex into the individual components. The polypeptide is Signal recognition particle protein (Rickettsia typhi (strain ATCC VR-144 / Wilmington)).